The chain runs to 198 residues: Nucleoside triphosphate pyrophosphatase (198 aa).

Aspartate 70 (proton acceptor) is an active-site residue.

The protein belongs to the Maf family. A divalent metal cation is required as a cofactor.

Its subcellular location is the cytoplasm. It carries out the reaction a ribonucleoside 5'-triphosphate + H2O = a ribonucleoside 5'-phosphate + diphosphate + H(+). It catalyses the reaction a 2'-deoxyribonucleoside 5'-triphosphate + H2O = a 2'-deoxyribonucleoside 5'-phosphate + diphosphate + H(+). Functionally, nucleoside triphosphate pyrophosphatase. May have a dual role in cell division arrest and in preventing the incorporation of modified nucleotides into cellular nucleic acids. The protein is Nucleoside triphosphate pyrophosphatase of Thermosynechococcus vestitus (strain NIES-2133 / IAM M-273 / BP-1).